The chain runs to 429 residues: Enolase (429 aa).

Gln164 lines the (2R)-2-phosphoglycerate pocket. Glu206 serves as the catalytic Proton donor. Residues Asp243, Glu286, and Asp313 each coordinate Mg(2+). (2R)-2-phosphoglycerate is bound by residues Lys338, Arg367, Ser368, and Lys389. Lys338 (proton acceptor) is an active-site residue.

It belongs to the enolase family. In terms of assembly, homooctamer. Forms a ring-shaped particle. Mg(2+) serves as cofactor.

The protein resides in the cytoplasm. It localises to the secreted. Its subcellular location is the cell surface. The catalysed reaction is (2R)-2-phosphoglycerate = phosphoenolpyruvate + H2O. The protein operates within carbohydrate degradation; glycolysis; pyruvate from D-glyceraldehyde 3-phosphate: step 4/5. With respect to regulation, inhibited by fluoride and phosphate. Catalyzes the reversible conversion of 2-phosphoglycerate (2-PG) into phosphoenolpyruvate (PEP). It is essential for the degradation of carbohydrates via glycolysis. The sequence is that of Enolase from Thermotoga maritima (strain ATCC 43589 / DSM 3109 / JCM 10099 / NBRC 100826 / MSB8).